We begin with the raw amino-acid sequence, 72 residues long: Gas vesicle protein A (72 aa).

Belongs to the gas vesicle GvpA family. In terms of assembly, the gas vesicle shell is 2 nm thick and consists of a single layer of this protein. It forms helical ribs nearly perpendicular to the long axis of the vesicle.

It localises to the gas vesicle shell. Functionally, gas vesicles are hollow, gas filled proteinaceous nanostructures found in some microorganisms. During planktonic growth they allow positioning of the organism at a favorable depth for light or nutrient acquisition. GvpA forms the protein shell. The protein is Gas vesicle protein A of Geotalea uraniireducens (strain Rf4) (Geobacter uraniireducens).